The following is a 289-amino-acid chain: ATP synthase gamma chain (289 aa).

Belongs to the ATPase gamma chain family. In terms of assembly, F-type ATPases have 2 components, CF(1) - the catalytic core - and CF(0) - the membrane proton channel. CF(1) has five subunits: alpha(3), beta(3), gamma(1), delta(1), epsilon(1). CF(0) has three main subunits: a, b and c.

It is found in the cell inner membrane. Its function is as follows. Produces ATP from ADP in the presence of a proton gradient across the membrane. The gamma chain is believed to be important in regulating ATPase activity and the flow of protons through the CF(0) complex. The protein is ATP synthase gamma chain of Polynucleobacter necessarius subsp. necessarius (strain STIR1).